The primary structure comprises 474 residues: MERRTKIVCTLGPAVASADGILRLVQDGMDVARLNFSHGDHPDHEQNYKWVREATDKTGRAVGILADLQGPKIRLGRFKEGSTVWETGETVRITVDDVEGTHDRVSTTYKNLAKDARPGDRLLVDDGKVGLVCVSVEGNDVICEVTEGGPVSNNKGVSLPGMDISVPALSEKDIKDLRFALKLGVDFIALSFVRSPADVELVHAIMDEEGRRVPVIAKLEKPEAVAALESIVLAFDAIMVARGDLGVEVPLEEVPLVQKRAIQIARENAKPVIVATQMLDSMIENSRPTRAEASDVANAVLDGADAVMLSGETSVGKDPHNVVRTMSRIVRFAETDGRVPDLTHIPRTKRGVISYSARDIAERLNARALVAFTTSGDTAKRLARLHSHLPLLVFTPDPSVRSQLALTWGAQTFLCPKVDDTDGMMREVDRALLAMDEYQKDDMMVVVAGSPPGVTGNTNMIHVHLLGEDTRIPK.

Residue Arg33 coordinates substrate. Residues Asn35, Ser37, and Asp67 each coordinate K(+). Position 35–38 (35–38 (NFSH)) interacts with ATP. Residues Arg74 and Lys155 each contribute to the ATP site. Residue Glu220 coordinates Mg(2+). Gly243, Asp244, and Thr276 together coordinate substrate. Asp244 provides a ligand contact to Mg(2+).

It belongs to the pyruvate kinase family. In terms of assembly, homotetramer. Requires Mg(2+) as cofactor. K(+) serves as cofactor.

The catalysed reaction is pyruvate + ATP = phosphoenolpyruvate + ADP + H(+). It functions in the pathway carbohydrate degradation; glycolysis; pyruvate from D-glyceraldehyde 3-phosphate: step 5/5. This chain is Pyruvate kinase (pyk), found in Corynebacterium efficiens (strain DSM 44549 / YS-314 / AJ 12310 / JCM 11189 / NBRC 100395).